Reading from the N-terminus, the 516-residue chain is D-aminopeptidase (516 aa).

The Nucleophile role is filled by serine 61. Catalysis depends on lysine 64, which acts as the Proton donor/acceptor. The interval 476–486 is important for specificity; it reads RRSMDAPAPGD. Aspartate 480 serves as a coordination point for substrate.

The protein belongs to the peptidase S12 family. Homodimer.

The catalysed reaction is Release of an N-terminal D-amino acid from a peptide, Xaa-|-Yaa-, in which Xaa is preferably D-Ala, D-Ser or D-Thr. D-amino acid amides and methyl esters also are hydrolyzed, as is glycine amide.. Its activity is regulated as follows. Inhibited by beta-lactam compounds such as 6-aminopenicillic acid, 7-aminocephalosporanic acid, benzylpenicillin and ampicillin. Inhibited by p-chloromercuribenzoate. In terms of biological role, hydrolyzes N-terminal residues in D-amino acid-containing peptides. The protein is D-aminopeptidase of Cereibacter sphaeroides (strain ATCC 17023 / DSM 158 / JCM 6121 / CCUG 31486 / LMG 2827 / NBRC 12203 / NCIMB 8253 / ATH 2.4.1.) (Rhodobacter sphaeroides).